A 1752-amino-acid chain; its full sequence is Serine protease/ABC transporter B family protein tagA (1752 aa).

The N-terminal stretch at 1–24 is a signal peptide; it reads MNKKLFIFGLSLFLFLFIFNLSLS. Asn-20 is a glycosylation site (N-linked (GlcNAc...) asparagine). The Peptidase S8 domain occupies 280 to 696; sequence HYSIQSGSAS…FGNIQLSKLI (417 aa). Catalysis depends on charge relay system residues Asp-312 and His-352. Asn-400 and Asn-557 each carry an N-linked (GlcNAc...) asparagine glycan. Catalysis depends on Ser-625, which acts as the Charge relay system. N-linked (GlcNAc...) asparagine glycosylation is found at Asn-653, Asn-785, and Asn-823. Residues 909 to 929 traverse the membrane as a helical segment; it reads IVLLGIFGIIIVGAVIFVLVC. A disordered region spans residues 946–1032; it reads DKGGDGNSIR…QNNSPQYDED (87 aa). Residues 962-994 show a composition bias toward low complexity; that stretch reads NNNNNNNNNNNNNNNNNNNNNNNNNNNNNNNNN. Asn-993 is a glycosylation site (N-linked (GlcNAc...) asparagine). The segment covering 995-1004 has biased composition (polar residues); the sequence is SNGKQSNIEL. Over residues 1013 to 1028 the composition is skewed to low complexity; sequence GTPNGDDQQQQNNSPQ. The next 6 membrane-spanning stretches (helical) occupy residues 1058 to 1078, 1102 to 1122, 1174 to 1194, 1200 to 1220, 1285 to 1305, and 1315 to 1335; these read ILGL…AVPL, FALI…LLAL, IPHM…LFII, LVVL…GGYI, TSGI…SSLV, and LIAF…VASL. One can recognise an ABC transmembrane type-1 domain in the interval 1059–1341; the sequence is LGLALFLSFI…VASLYTTYKS (283 aa). In terms of domain architecture, ABC transporter spans 1374–1610; the sequence is IQFNKVSFAY…KGMFYDFVQI (237 aa). 1409–1416 lines the ATP pocket; it reads GPSGGGKS. The segment at 1621–1686 is disordered; that stretch reads IQLPSNSRNT…SRSPPPMWRQ (66 aa). Residues 1631–1642 show a composition bias toward basic and acidic residues; the sequence is RNADKLRNRSET. N-linked (GlcNAc...) asparagine glycans are attached at residues Asn-1638, Asn-1670, and Asn-1694.

It in the C-terminal section; belongs to the ABC transporter superfamily. ABCB family. Multidrug resistance exporter (TC 3.A.1.201) subfamily. The protein in the N-terminal section; belongs to the peptidase S8 family.

It localises to the membrane. Required for a general cell fate determination at the onset of development. Required for the specification of an initial population of prespore cells in which tagA is expressed. Required for normal SDF-2 signaling during spore encapsulation. This is Serine protease/ABC transporter B family protein tagA (tagA) from Dictyostelium discoideum (Social amoeba).